Consider the following 471-residue polypeptide: Trehalose-binding lipoprotein LpqY (471 aa).

Positions 1-28 (MDGRQVVRARRWCATAAVALMTASTVAA) are cleaved as a signal peptide. Cys29 carries the N-palmitoyl cysteine lipid modification. A lipid anchor (S-diacylglycerol cysteine) is attached at Cys29. Alpha,alpha-trehalose-binding residues include Asn45, Glu46, Gln79, Asp100, Asn154, Tyr198, Trp279, Tyr281, Gly354, and Arg424. A disulfide bridge links Cys57 with Cys375.

Belongs to the bacterial solute-binding protein 1 family. Monomer. The complex is composed of two ATP-binding proteins (SugC), two transmembrane proteins (SugA and SugB) and a solute-binding protein (LpqY).

Its subcellular location is the cell inner membrane. In terms of biological role, part of the ABC transporter complex LpqY-SugA-SugB-SugC, which is highly specific for uptake of trehalose. Involved in the recycling of extracellular trehalose released from trehalose-containing molecules synthesized by M.thermoresistibile. Trehalose uptake is essential for virulence. Binds deuterated trehalose with similar high affinity to trehalose, trehalose analogs including galactotrehalose, 4-azido-4-deoxy-trehalose, 6-azido-6-deoxy-trehalose, 3-azido-3-deoxy-trehalose and mannotrehalose in the order of decreasing affinity, respectively, and 2-azido-2-deoxy-trehalose and kojibiose (alpha1,2-glycosidic bond) with very low affinity. Does not recognize single glucose, 6-amino-6-deoxy-trehalose, trehalose-6-phosphate, nigerose (alpha1,3-glycosidic bond), maltose (alpha1,4-glycosidic bond), isomaltose (alpha1,6-glycosidic bond) or glycerophosphocholine. Decreased recognition of alpha,beta-trehalose and almost no recognition of beta,beta-trehalose. Substrate specificity indicates a strict requirement for an alpha1,1-linked disaccharide. This is Trehalose-binding lipoprotein LpqY from Mycolicibacterium thermoresistibile (strain ATCC 19527 / DSM 44167 / CIP 105390 / JCM 6362 / NCTC 10409 / 316) (Mycobacterium thermoresistibile).